We begin with the raw amino-acid sequence, 286 residues long: Shikimate dehydrogenase (NADP(+)) (286 aa).

Residues 19-21 (SLS) and threonine 66 contribute to the shikimate site. The Proton acceptor role is filled by lysine 70. Residues asparagine 91 and aspartate 107 each contribute to the shikimate site. Residues 129–133 (GSGGA) and leucine 229 contribute to the NADP(+) site. A shikimate-binding site is contributed by tyrosine 231. Glycine 252 contacts NADP(+).

This sequence belongs to the shikimate dehydrogenase family. Homodimer.

It catalyses the reaction shikimate + NADP(+) = 3-dehydroshikimate + NADPH + H(+). It participates in metabolic intermediate biosynthesis; chorismate biosynthesis; chorismate from D-erythrose 4-phosphate and phosphoenolpyruvate: step 4/7. Involved in the biosynthesis of the chorismate, which leads to the biosynthesis of aromatic amino acids. Catalyzes the reversible NADPH linked reduction of 3-dehydroshikimate (DHSA) to yield shikimate (SA). This is Shikimate dehydrogenase (NADP(+)) from Prochlorococcus marinus (strain MIT 9312).